The primary structure comprises 643 residues: Fructose-1,6-bisphosphatase class 3 (643 aa).

This sequence belongs to the FBPase class 3 family. Mn(2+) serves as cofactor.

The catalysed reaction is beta-D-fructose 1,6-bisphosphate + H2O = beta-D-fructose 6-phosphate + phosphate. It functions in the pathway carbohydrate biosynthesis; gluconeogenesis. This is Fructose-1,6-bisphosphatase class 3 from Lacticaseibacillus paracasei (strain ATCC 334 / BCRC 17002 / CCUG 31169 / CIP 107868 / KCTC 3260 / NRRL B-441) (Lactobacillus paracasei).